Here is a 1207-residue protein sequence, read N- to C-terminus: DNA-directed RNA polymerase subunit beta' (1207 aa).

Residues Cys60, Cys62, Cys75, and Cys78 each contribute to the Zn(2+) site. The Mg(2+) site is built by Asp449, Asp451, and Asp453. 4 residues coordinate Zn(2+): Cys822, Cys896, Cys903, and Cys906.

The protein belongs to the RNA polymerase beta' chain family. The RNAP catalytic core consists of 2 alpha, 1 beta, 1 beta' and 1 omega subunit. When a sigma factor is associated with the core the holoenzyme is formed, which can initiate transcription. Mg(2+) serves as cofactor. It depends on Zn(2+) as a cofactor.

It carries out the reaction RNA(n) + a ribonucleoside 5'-triphosphate = RNA(n+1) + diphosphate. DNA-dependent RNA polymerase catalyzes the transcription of DNA into RNA using the four ribonucleoside triphosphates as substrates. This Staphylococcus aureus (strain MRSA252) protein is DNA-directed RNA polymerase subunit beta'.